A 296-amino-acid polypeptide reads, in one-letter code: ATP-dependent ribose-1-phosphate kinase (296 aa).

The active-site Proton acceptor is the Asp242.

It belongs to the carbohydrate kinase PfkB family. Mg(2+) serves as cofactor.

The catalysed reaction is alpha-D-ribose 1-phosphate + ATP = alpha-D-ribose 1,5-bisphosphate + ADP + H(+). Its activity is regulated as follows. Requires salt for kinase activity. 2.0 M is the optimal KCl concentration. In terms of biological role, kinase involved in the non-carboxylating pentose bisphosphate pathway, a nucleoside degradation pathway present in some halophilic archaea. Catalyzes the ATP-dependent phosphorylation of ribose 1-phosphate (R1P) to ribose 1,5-bisphosphate (R15P). Shows weak activity towards various other phosphate acceptors, such as xylulose, 2'-deoxyguanosine and D-ribulose. ATP is the most preferred phosphate donor, followed by CTP and GTP. The chain is ATP-dependent ribose-1-phosphate kinase from Halopiger xanaduensis (strain DSM 18323 / JCM 14033 / SH-6).